A 171-amino-acid chain; its full sequence is 6,7-dimethyl-8-ribityllumazine synthase (171 aa).

5-amino-6-(D-ribitylamino)uracil is bound by residues Phe24, 58 to 60, and 82 to 84; these read ALE and AVI. 87-88 contacts (2S)-2-hydroxy-3-oxobutyl phosphate; the sequence is ET. The Proton donor role is filled by His90. Asn115 serves as a coordination point for 5-amino-6-(D-ribitylamino)uracil. Arg129 is a (2S)-2-hydroxy-3-oxobutyl phosphate binding site. The disordered stretch occupies residues 150-171; it reads ALDQLGDDEDEEEDEEDEEERA. Acidic residues predominate over residues 154-171; it reads LGDDEDEEEDEEDEEERA.

This sequence belongs to the DMRL synthase family.

It catalyses the reaction (2S)-2-hydroxy-3-oxobutyl phosphate + 5-amino-6-(D-ribitylamino)uracil = 6,7-dimethyl-8-(1-D-ribityl)lumazine + phosphate + 2 H2O + H(+). It functions in the pathway cofactor biosynthesis; riboflavin biosynthesis; riboflavin from 2-hydroxy-3-oxobutyl phosphate and 5-amino-6-(D-ribitylamino)uracil: step 1/2. Its function is as follows. Catalyzes the formation of 6,7-dimethyl-8-ribityllumazine by condensation of 5-amino-6-(D-ribitylamino)uracil with 3,4-dihydroxy-2-butanone 4-phosphate. This is the penultimate step in the biosynthesis of riboflavin. This chain is 6,7-dimethyl-8-ribityllumazine synthase, found in Burkholderia ambifaria (strain ATCC BAA-244 / DSM 16087 / CCUG 44356 / LMG 19182 / AMMD) (Burkholderia cepacia (strain AMMD)).